A 224-amino-acid polypeptide reads, in one-letter code: 7-cyano-7-deazaguanine synthase (224 aa).

ATP is bound at residue 8–18; sequence LSGGMDSAAVI. Zn(2+)-binding residues include cysteine 186, cysteine 196, cysteine 199, and cysteine 202.

The protein belongs to the QueC family. Requires Zn(2+) as cofactor.

The catalysed reaction is 7-carboxy-7-deazaguanine + NH4(+) + ATP = 7-cyano-7-deazaguanine + ADP + phosphate + H2O + H(+). It functions in the pathway purine metabolism; 7-cyano-7-deazaguanine biosynthesis. Its function is as follows. Catalyzes the ATP-dependent conversion of 7-carboxy-7-deazaguanine (CDG) to 7-cyano-7-deazaguanine (preQ(0)). This chain is 7-cyano-7-deazaguanine synthase, found in Xanthomonas campestris pv. campestris (strain 8004).